Consider the following 278-residue polypeptide: Complement C1q tumor necrosis factor-related protein 6 (278 aa).

The first 46 residues, 1-46 (MQWLRVRESPGEATGHRVTMGTAALGPVWAALLLFLLMCEIPMVEL), serve as a signal peptide directing secretion. The N-linked (GlcNAc...) asparagine glycan is linked to N91. A Collagen-like domain is found at 97–138 (GDKGDPGPMGLPGYMGREGPQGEPGPQGSKGDKGEMGSPGAP). Residues 99-135 (KGDPGPMGLPGYMGREGPQGEPGPQGSKGDKGEMGSP) form a disordered region. The C1q domain maps to 139 to 259 (CQKRFFAFSV…KRQRENAIYS (121 aa)).

Its subcellular location is the secreted. The sequence is that of Complement C1q tumor necrosis factor-related protein 6 (C1QTNF6) from Homo sapiens (Human).